We begin with the raw amino-acid sequence, 322 residues long: Ferredoxin--NADP reductase (322 aa).

FAD contacts are provided by E37, Q45, Y50, I91, F128, and D290.

Belongs to the ferredoxin--NADP reductase type 2 family. As to quaternary structure, homodimer. FAD serves as cofactor.

It catalyses the reaction 2 reduced [2Fe-2S]-[ferredoxin] + NADP(+) + H(+) = 2 oxidized [2Fe-2S]-[ferredoxin] + NADPH. The polypeptide is Ferredoxin--NADP reductase (Malacoplasma penetrans (strain HF-2) (Mycoplasma penetrans)).